An 85-amino-acid chain; its full sequence is Large ribosomal subunit protein bL27 (85 aa).

Residues 1 to 22 (MAHKKGGGSSRNGRDSNAQRRG) form a disordered region.

Belongs to the bacterial ribosomal protein bL27 family.

The polypeptide is Large ribosomal subunit protein bL27 (Sorangium cellulosum (strain So ce56) (Polyangium cellulosum (strain So ce56))).